The primary structure comprises 29 residues: Protein Tat (29 aa).

The disordered stretch occupies residues 1–29; that stretch reads PSSQPRGDPTGQEEPKKKVEKKTTTDPFD. The Cell attachment site signature appears at 6–8; that stretch reads RGD. Over residues 13 to 29 the composition is skewed to basic and acidic residues; it reads EEPKKKVEKKTTTDPFD.

The protein belongs to the lentiviruses Tat family. In terms of assembly, interacts with host CCNT1. Associates with the P-TEFb complex composed at least of Tat, P-TEFb (CDK9 and CCNT1), TAR RNA, RNA Pol II. Recruits the HATs CREBBP, TAF1/TFIID, EP300, PCAF and GCN5L2. Interacts with host KAT5/Tip60; this interaction targets the latter to degradation. Interacts with the host deacetylase SIRT1. Interacts with host capping enzyme RNGTT; this interaction stimulates RNGTT. Binds to host KDR, and to the host integrins ITGAV/ITGB3 and ITGA5/ITGB1. Interacts with host KPNB1/importin beta-1 without previous binding to KPNA1/importin alpha-1. Interacts with EIF2AK2. Interacts with host nucleosome assembly protein NAP1L1; this interaction may be required for the transport of Tat within the nucleus, since the two proteins interact at the nuclear rim. Interacts with host C1QBP/SF2P32; this interaction involves lysine-acetylated Tat. Interacts with the host chemokine receptors CCR2, CCR3 and CXCR4. Interacts with host DPP4/CD26; this interaction may trigger an anti-proliferative effect. Interacts with host LDLR. Interacts with the host extracellular matrix metalloproteinase MMP1. Interacts with host PRMT6; this interaction mediates Tat's methylation. Interacts with, and is ubiquitinated by MDM2/Hdm2. Interacts with host PSMC3 and HTATIP2. Interacts with STAB1; this interaction may overcome SATB1-mediated repression of IL2 and IL2RA (interleukin) in T cells by binding to the same domain than HDAC1. Interacts (when acetylated) with human CDK13, thereby increasing HIV-1 mRNA splicing and promoting the production of the doubly spliced HIV-1 protein Nef. Post-translationally, acetylation by EP300, CREBBP, GCN5L2/GCN5 and PCAF regulates the transactivation activity of Tat. In terms of processing, phosphorylated by EIF2AK2 on serine and threonine residues adjacent to the basic region important for TAR RNA binding and function. Phosphorylation of Tat by EIF2AK2 is dependent on the prior activation of EIF2AK2 by dsRNA. Asymmetrical arginine methylation by host PRMT6 seems to diminish the transactivation capacity of Tat and affects the interaction with host CCNT1. Post-translationally, polyubiquitination by MDM2 does not target Tat to degradation, but activates its transactivation function and fosters interaction with CCNT1 and TAR RNA.

Its subcellular location is the host nucleus. It localises to the host nucleolus. The protein resides in the host cytoplasm. It is found in the secreted. In terms of biological role, transcriptional activator that increases RNA Pol II processivity, thereby increasing the level of full-length viral transcripts. Recognizes a hairpin structure at the 5'-LTR of the nascent viral mRNAs referred to as the transactivation responsive RNA element (TAR) and recruits the cyclin T1-CDK9 complex (P-TEFb complex) that will in turn hyperphosphorylate the RNA polymerase II to allow efficient elongation. The CDK9 component of P-TEFb and other Tat-activated kinases hyperphosphorylate the C-terminus of RNA Pol II that becomes stabilized and much more processive. Other factors such as HTATSF1/Tat-SF1, SUPT5H/SPT5, and HTATIP2 are also important for Tat's function. Besides its effect on RNA Pol II processivity, Tat induces chromatin remodeling of proviral genes by recruiting the histone acetyltransferases (HATs) CREBBP, EP300 and PCAF to the chromatin. This also contributes to the increase in proviral transcription rate, especially when the provirus integrates in transcriptionally silent region of the host genome. To ensure maximal activation of the LTR, Tat mediates nuclear translocation of NF-kappa-B by interacting with host RELA. Through its interaction with host TBP, Tat may also modulate transcription initiation. Tat can reactivate a latently infected cell by penetrating in it and transactivating its LTR promoter. In the cytoplasm, Tat is thought to act as a translational activator of HIV-1 mRNAs. Functionally, extracellular circulating Tat can be endocytosed by surrounding uninfected cells via the binding to several surface receptors such as CD26, CXCR4, heparan sulfate proteoglycans (HSPG) or LDLR. Neurons are rarely infected, but they internalize Tat via their LDLR. Endosomal low pH allows Tat to cross the endosome membrane to enter the cytosol and eventually further translocate into the nucleus, thereby inducing severe cell dysfunctions ranging from cell activation to cell death. Through its interaction with nuclear HATs, Tat is potentially able to control the acetylation-dependent cellular gene expression. Tat seems to inhibit the HAT activity of KAT5/Tip60 and TAF1, and consequently modify the expression of specific cellular genes. Modulates the expression of many cellular genes involved in cell survival, proliferation or in coding for cytokines (such as IL10) or cytokine receptors. May be involved in the derepression of host interleukin IL2 expression. Mediates the activation of cyclin-dependent kinases and dysregulation of microtubule network. Tat plays a role in T-cell and neurons apoptosis. Tat induced neurotoxicity and apoptosis probably contribute to neuroAIDS. Host extracellular matrix metalloproteinase MMP1 cleaves Tat and decreases Tat's mediated neurotoxicity. Circulating Tat also acts as a chemokine-like and/or growth factor-like molecule that binds to specific receptors on the surface of the cells, affecting many cellular pathways. In the vascular system, Tat binds to ITGAV/ITGB3 and ITGA5/ITGB1 integrins dimers at the surface of endothelial cells and competes with bFGF for heparin-binding sites, leading to an excess of soluble bFGF. Binds to KDR/VEGFR-2. All these Tat-mediated effects enhance angiogenesis in Kaposi's sarcoma lesions. The sequence is that of Protein Tat from Homo sapiens (Human).